The following is a 770-amino-acid chain: Probable methyltransferase PMT24 (770 aa).

Topologically, residues 1-17 (MAMGKYSRVDGKKSSGY) are cytoplasmic. Residues 18–38 (GLTITIVLIVSLCLVGAWMFM) traverse the membrane as a helical; Signal-anchor for type II membrane protein segment. Topologically, residues 39-770 (SSWSAPTESI…EAETIQSAIA (732 aa)) are lumenal. Basic and acidic residues-rich tracts occupy residues 54-81 (ERTK…FPDE) and 93-164 (NEEK…KSED). Positions 54–223 (ERTKDVDTTK…STGSGAWSTQ (170 aa)) are disordered. N-linked (GlcNAc...) asparagine glycosylation is found at asparagine 160 and asparagine 166. Residues 212-223 (ESSTGSGAWSTQ) are compositionally biased toward polar residues. 2 N-linked (GlcNAc...) asparagine glycosylation sites follow: asparagine 244 and asparagine 363.

The protein belongs to the methyltransferase superfamily.

Its subcellular location is the golgi apparatus membrane. The protein is Probable methyltransferase PMT24 of Arabidopsis thaliana (Mouse-ear cress).